We begin with the raw amino-acid sequence, 247 residues long: DNA polymerase sliding clamp (247 aa).

Belongs to the PCNA family. As to quaternary structure, homotrimer. The subunits circularize to form a toroid; DNA passes through its center. Replication factor C (RFC) is required to load the toroid on the DNA.

Functionally, sliding clamp subunit that acts as a moving platform for DNA processing. Responsible for tethering the catalytic subunit of DNA polymerase and other proteins to DNA during high-speed replication. This chain is DNA polymerase sliding clamp, found in Natronomonas pharaonis (strain ATCC 35678 / DSM 2160 / CIP 103997 / JCM 8858 / NBRC 14720 / NCIMB 2260 / Gabara) (Halobacterium pharaonis).